Reading from the N-terminus, the 543-residue chain is Cytochrome P450 307a1 (543 aa).

At S219 the chain carries Phosphoserine. A disordered region spans residues 440-460 (FLEPSKEQSPKNSKGSDSGIE). Residues 449–460 (PKNSKGSDSGIE) are compositionally biased toward polar residues. C485 is a binding site for heme.

Belongs to the cytochrome P450 family. Requires heme as cofactor.

It localises to the endoplasmic reticulum membrane. It is found in the microsome membrane. Required for correct development of the embryonic midline glial cells which are necessary for the formation of distinct segmental commissures. The sequence is that of Cytochrome P450 307a1 (spo) from Drosophila melanogaster (Fruit fly).